A 445-amino-acid polypeptide reads, in one-letter code: Phosphoglucosamine mutase (445 aa).

Residue Ser102 is the Phosphoserine intermediate of the active site. Mg(2+) contacts are provided by Ser102, Asp241, Asp243, and Asp245. Ser102 bears the Phosphoserine mark.

The protein belongs to the phosphohexose mutase family. Mg(2+) serves as cofactor. Post-translationally, activated by phosphorylation.

It catalyses the reaction alpha-D-glucosamine 1-phosphate = D-glucosamine 6-phosphate. Its function is as follows. Catalyzes the conversion of glucosamine-6-phosphate to glucosamine-1-phosphate. This chain is Phosphoglucosamine mutase, found in Serratia proteamaculans (strain 568).